The chain runs to 218 residues: Large ribosomal subunit protein uL4 (218 aa).

A disordered region spans residues 54 to 106 (GTHAVKNRGAVSGGGRKPWKQKGTGRARQGSIRAPQWYHGGVAHGPVPRDYSQ).

Belongs to the universal ribosomal protein uL4 family. Part of the 50S ribosomal subunit.

Functionally, one of the primary rRNA binding proteins, this protein initially binds near the 5'-end of the 23S rRNA. It is important during the early stages of 50S assembly. It makes multiple contacts with different domains of the 23S rRNA in the assembled 50S subunit and ribosome. Forms part of the polypeptide exit tunnel. This Bifidobacterium animalis subsp. lactis (strain AD011) protein is Large ribosomal subunit protein uL4.